Reading from the N-terminus, the 407-residue chain is Magnesium-protoporphyrin IX monomethyl ester [oxidative] cyclase 1, chloroplastic (407 aa).

Residues 1–10 (MQTTLKQQRA) are compositionally biased toward polar residues. The tract at residues 1 to 28 (MQTTLKQQRASGRVSARQPFRSAAVARP) is disordered.

Belongs to the AcsF family. Fe cation serves as cofactor.

It is found in the plastid. The protein resides in the chloroplast thylakoid membrane. It catalyses the reaction Mg-protoporphyrin IX 13-monomethyl ester + 3 NADPH + 3 O2 + 2 H(+) = 3,8-divinyl protochlorophyllide a + 3 NADP(+) + 5 H2O. It participates in porphyrin-containing compound metabolism; chlorophyll biosynthesis. Catalyzes the formation of the isocyclic ring in chlorophyll biosynthesis under oxygen- and copper-deficient conditions. Mediates the cyclase reaction, which results in the formation of divinylprotochlorophyllide (Pchlide) characteristic of all chlorophylls from magnesium-protoporphyrin IX 13-monomethyl ester (MgPMME). In Chlamydomonas reinhardtii (Chlamydomonas smithii), this protein is Magnesium-protoporphyrin IX monomethyl ester [oxidative] cyclase 1, chloroplastic (CRD1).